An 89-amino-acid chain; its full sequence is Small ribosomal subunit protein uS15 (89 aa).

Belongs to the universal ribosomal protein uS15 family. In terms of assembly, part of the 30S ribosomal subunit. Forms a bridge to the 50S subunit in the 70S ribosome, contacting the 23S rRNA.

Its function is as follows. One of the primary rRNA binding proteins, it binds directly to 16S rRNA where it helps nucleate assembly of the platform of the 30S subunit by binding and bridging several RNA helices of the 16S rRNA. In terms of biological role, forms an intersubunit bridge (bridge B4) with the 23S rRNA of the 50S subunit in the ribosome. This Neisseria gonorrhoeae (strain ATCC 700825 / FA 1090) protein is Small ribosomal subunit protein uS15.